Here is a 131-residue protein sequence, read N- to C-terminus: Global transcriptional regulator Spx (131 aa).

The cysteines at positions 10 and 13 are disulfide-linked.

This sequence belongs to the ArsC family. Spx subfamily. As to quaternary structure, interacts with the C-terminal domain of the alpha subunit of the RNAP.

The protein localises to the cytoplasm. Under non-stress conditions, Spx is degraded by ClpXP. Efficient degradation by ClpXP requires the adapter protein SpxH/YjbH. Function, levels and solubility of Spx are affected by SpxH/YjbH aggregation and stress conditions. Its function is as follows. Global transcriptional regulator that plays a key role in stress response and exerts either positive or negative regulation of genes. Acts by interacting with the C-terminal domain of the alpha subunit of the RNA polymerase (RNAP). This interaction can enhance binding of RNAP to the promoter region of target genes and stimulate their transcription, or block interaction of RNAP with activator proteins and repress transcription. Required for transcription of thioredoxin reductase (trxB). Modulates the expression of icaR, encoding a repressor of the biofilm operon icaADBC. Also controls the transcription of trfA, a gene implicated in cell wall antibiotic resistance, which in turn is required for degradation of MazE antitoxin, the unstable component of the MazEF toxin-antitoxin system, that neutralizes the endoribonuclease activity of MazF toxin. This chain is Global transcriptional regulator Spx, found in Staphylococcus aureus (strain NCTC 8325 / PS 47).